Reading from the N-terminus, the 706-residue chain is Translation factor GUF1 homolog, mitochondrial (706 aa).

One can recognise a tr-type G domain in the interval 89–272 (SRIRNFSIIA…SIVKNVPPPQ (184 aa)). GTP-binding positions include 98–105 (AHIDHGKS), 165–169 (DTPGH), and 219–222 (NKID).

Belongs to the TRAFAC class translation factor GTPase superfamily. Classic translation factor GTPase family. LepA subfamily.

The protein resides in the mitochondrion inner membrane. It carries out the reaction GTP + H2O = GDP + phosphate + H(+). Its function is as follows. Promotes mitochondrial protein synthesis. May act as a fidelity factor of the translation reaction, by catalyzing a one-codon backward translocation of tRNAs on improperly translocated ribosomes. Binds to mitochondrial ribosomes in a GTP-dependent manner. This Thalassiosira pseudonana (Marine diatom) protein is Translation factor GUF1 homolog, mitochondrial.